Reading from the N-terminus, the 171-residue chain is Shikimate kinase (171 aa).

Residue 14–19 participates in ATP binding; sequence GAGKST. Mg(2+) is bound at residue Ser-18. The substrate site is built by Asp-36, Arg-60, and Gly-82. Position 120 (Arg-120) interacts with ATP. Arg-139 contacts substrate. Gln-156 lines the ATP pocket.

It belongs to the shikimate kinase family. Monomer. It depends on Mg(2+) as a cofactor.

It is found in the cytoplasm. It carries out the reaction shikimate + ATP = 3-phosphoshikimate + ADP + H(+). It functions in the pathway metabolic intermediate biosynthesis; chorismate biosynthesis; chorismate from D-erythrose 4-phosphate and phosphoenolpyruvate: step 5/7. Catalyzes the specific phosphorylation of the 3-hydroxyl group of shikimic acid using ATP as a cosubstrate. This chain is Shikimate kinase, found in Pseudoalteromonas atlantica (strain T6c / ATCC BAA-1087).